A 404-amino-acid polypeptide reads, in one-letter code: uncharacterized protein (404 aa).

Positions 1-21 (MRKLGLALSIMGLLLVSIVAG) are cleaved as a signal peptide. Cys22 carries the N-acetylcysteine modification. Cys22 carries S-archaeol cysteine lipidation.

Belongs to the BMP lipoprotein family.

It localises to the cell membrane. This is an uncharacterized protein from Pyrococcus abyssi (strain GE5 / Orsay).